A 591-amino-acid chain; its full sequence is Aspartate--tRNA(Asp/Asn) ligase (591 aa).

Position 175 (glutamate 175) interacts with L-aspartate. The interval glutamine 199–lysine 202 is aspartate. The L-aspartate site is built by arginine 221 and histidine 453. Arginine 221–glutamate 223 is a binding site for ATP. Glutamate 486 contributes to the ATP binding site. Arginine 493 lines the L-aspartate pocket. Glycine 538–arginine 541 is an ATP binding site.

This sequence belongs to the class-II aminoacyl-tRNA synthetase family. Type 1 subfamily. Homodimer.

The protein resides in the cytoplasm. The enzyme catalyses tRNA(Asx) + L-aspartate + ATP = L-aspartyl-tRNA(Asx) + AMP + diphosphate. Functionally, aspartyl-tRNA synthetase with relaxed tRNA specificity since it is able to aspartylate not only its cognate tRNA(Asp) but also tRNA(Asn). Reaction proceeds in two steps: L-aspartate is first activated by ATP to form Asp-AMP and then transferred to the acceptor end of tRNA(Asp/Asn). The sequence is that of Aspartate--tRNA(Asp/Asn) ligase from Jannaschia sp. (strain CCS1).